Reading from the N-terminus, the 214-residue chain is NADH-quinone oxidoreductase subunit C (214 aa).

Belongs to the complex I 30 kDa subunit family. In terms of assembly, NDH-1 is composed of 14 different subunits. Subunits NuoB, C, D, E, F, and G constitute the peripheral sector of the complex.

It is found in the cell inner membrane. The catalysed reaction is a quinone + NADH + 5 H(+)(in) = a quinol + NAD(+) + 4 H(+)(out). NDH-1 shuttles electrons from NADH, via FMN and iron-sulfur (Fe-S) centers, to quinones in the respiratory chain. The immediate electron acceptor for the enzyme in this species is believed to be ubiquinone. Couples the redox reaction to proton translocation (for every two electrons transferred, four hydrogen ions are translocated across the cytoplasmic membrane), and thus conserves the redox energy in a proton gradient. The protein is NADH-quinone oxidoreductase subunit C of Francisella tularensis subsp. novicida (strain U112).